A 271-amino-acid chain; its full sequence is Aminodeoxychorismate lyase (271 aa).

Position 140 is an N6-(pyridoxal phosphate)lysine (Lys-140).

This sequence belongs to the class-IV pyridoxal-phosphate-dependent aminotransferase family. Homodimer. The cofactor is pyridoxal 5'-phosphate.

The catalysed reaction is 4-amino-4-deoxychorismate = 4-aminobenzoate + pyruvate + H(+). It participates in cofactor biosynthesis; tetrahydrofolate biosynthesis; 4-aminobenzoate from chorismate: step 2/2. Involved in the biosynthesis of p-aminobenzoate (PABA), a precursor of tetrahydrofolate. Converts 4-amino-4-deoxychorismate into 4-aminobenzoate (PABA) and pyruvate. This Vibrio harveyi (Beneckea harveyi) protein is Aminodeoxychorismate lyase (pabC).